We begin with the raw amino-acid sequence, 317 residues long: Melanocyte-stimulating hormone receptor (317 aa).

Over 1–37 (MPVQGSQRRLLGSLNSTPTATPHLGLAANQTGARCLE) the chain is Extracellular. Asn29 carries an N-linked (GlcNAc...) asparagine glycan. Residues 38-63 (VSIPDGLFLSLGLVSLVENVLVVTAI) form a helical membrane-spanning segment. The Cytoplasmic portion of the chain corresponds to 64 to 72 (AKNRNLHSP). Residues 73–93 (MYCFICCLALSDLLVSGSNML) form a helical membrane-spanning segment. At 94–118 (ETAVILLLEAGALAARAAVVQQLDN) the chain is on the extracellular side. The helical transmembrane segment at 119-140 (VIDVITCSSMLSSLCFLGAIAV) threads the bilayer. Residues 141-163 (DRYISIFYALRYHSIVTLPRARR) are Cytoplasmic-facing. Residues 164-183 (AVAAIWVASVLFSMLFIAYY) form a helical membrane-spanning segment. Over 184–191 (DHAAVLLC) the chain is Extracellular. A helical transmembrane segment spans residues 192–211 (LVVFFLAMLVLMAVLYVHML). Over 212-240 (ARACQHAQGIARLHKRQRPAHQSFGLKGA) the chain is Cytoplasmic. Residues 241–266 (ATLTILLGIFFLCWGPFFLHLTLIVL) form a helical membrane-spanning segment. Topologically, residues 267–279 (CPQHPTCSCIFKN) are extracellular. Residues 280–300 (FNLFLTLIICNAIIDPLIYAF) traverse the membrane as a helical segment. The Cytoplasmic portion of the chain corresponds to 301–317 (RSQELRRTLKEVLLCSW). Cys315 carries S-palmitoyl cysteine lipidation.

The protein belongs to the G-protein coupled receptor 1 family. Interacts with MGRN1, but does not undergo MGRN1-mediated ubiquitination; this interaction competes with GNAS-binding and thus inhibits agonist-induced cAMP production. Interacts with OPN3; the interaction results in a decrease in MC1R-mediated cAMP signaling and ultimately a decrease in melanin production in melanocytes.

It is found in the cell membrane. In terms of biological role, receptor for MSH (alpha, beta and gamma) and ACTH. The activity of this receptor is mediated by G proteins which activate adenylate cyclase. Mediates melanogenesis, the production of eumelanin (black/brown) and phaeomelanin (red/yellow), via regulation of cAMP signaling in melanocytes. This is Melanocyte-stimulating hormone receptor (MC1R) from Erythrocebus patas (Red guenon).